A 258-amino-acid chain; its full sequence is Thiazole synthase 2 (258 aa).

K97 functions as the Schiff-base intermediate with DXP in the catalytic mechanism. 1-deoxy-D-xylulose 5-phosphate-binding positions include G158, 184-185, and 206-207; these read AG and NT.

It belongs to the ThiG family. Homotetramer. Forms heterodimers with either ThiH or ThiS.

It is found in the cytoplasm. The enzyme catalyses [ThiS sulfur-carrier protein]-C-terminal-Gly-aminoethanethioate + 2-iminoacetate + 1-deoxy-D-xylulose 5-phosphate = [ThiS sulfur-carrier protein]-C-terminal Gly-Gly + 2-[(2R,5Z)-2-carboxy-4-methylthiazol-5(2H)-ylidene]ethyl phosphate + 2 H2O + H(+). It participates in cofactor biosynthesis; thiamine diphosphate biosynthesis. Catalyzes the rearrangement of 1-deoxy-D-xylulose 5-phosphate (DXP) to produce the thiazole phosphate moiety of thiamine. Sulfur is provided by the thiocarboxylate moiety of the carrier protein ThiS. In vitro, sulfur can be provided by H(2)S. The polypeptide is Thiazole synthase 2 (Syntrophotalea carbinolica (strain DSM 2380 / NBRC 103641 / GraBd1) (Pelobacter carbinolicus)).